Consider the following 464-residue polypeptide: DNA primase DnaG (464 aa).

Positions 171 to 245 constitute a Toprim domain; sequence DTIIIVEGRA…DIDYVARAPK (75 aa). Glu-177, Asp-219, and Asp-221 together coordinate Mg(2+).

The protein belongs to the archaeal DnaG primase family. Forms a ternary complex with MCM helicase and DNA. It depends on Mg(2+) as a cofactor.

The enzyme catalyses ssDNA + n NTP = ssDNA/pppN(pN)n-1 hybrid + (n-1) diphosphate.. In terms of biological role, RNA polymerase that catalyzes the synthesis of short RNA molecules used as primers for DNA polymerase during DNA replication. This is DNA primase DnaG from Methanococcus aeolicus (strain ATCC BAA-1280 / DSM 17508 / OCM 812 / Nankai-3).